We begin with the raw amino-acid sequence, 253 residues long: Triosephosphate isomerase (253 aa).

Residue 8 to 10 coordinates substrate; that stretch reads NWK. H93 (electrophile) is an active-site residue. Residue E165 is the Proton acceptor of the active site. Substrate contacts are provided by residues G171, S210, and 231 to 232; that span reads GG.

This sequence belongs to the triosephosphate isomerase family. As to quaternary structure, homodimer.

It localises to the cytoplasm. It catalyses the reaction D-glyceraldehyde 3-phosphate = dihydroxyacetone phosphate. It functions in the pathway carbohydrate biosynthesis; gluconeogenesis. The protein operates within carbohydrate degradation; glycolysis; D-glyceraldehyde 3-phosphate from glycerone phosphate: step 1/1. Functionally, involved in the gluconeogenesis. Catalyzes stereospecifically the conversion of dihydroxyacetone phosphate (DHAP) to D-glyceraldehyde-3-phosphate (G3P). The polypeptide is Triosephosphate isomerase (Francisella tularensis subsp. holarctica (strain FTNF002-00 / FTA)).